The following is a 196-amino-acid chain: DnaA initiator-associating protein DiaA (196 aa).

An SIS domain is found at 34-196 (LVQSLLNGNK…DNTLFPHQDD (163 aa)).

The protein belongs to the SIS family. DiaA subfamily. In terms of assembly, homotetramer; dimer of dimers.

Required for the timely initiation of chromosomal replication via direct interactions with the DnaA initiator protein. The polypeptide is DnaA initiator-associating protein DiaA (Cronobacter sakazakii (strain ATCC BAA-894) (Enterobacter sakazakii)).